Reading from the N-terminus, the 101-residue chain is Urease subunit beta (101 aa).

This sequence belongs to the urease beta subunit family. Heterotrimer of UreA (gamma), UreB (beta) and UreC (alpha) subunits. Three heterotrimers associate to form the active enzyme.

Its subcellular location is the cytoplasm. The catalysed reaction is urea + 2 H2O + H(+) = hydrogencarbonate + 2 NH4(+). It participates in nitrogen metabolism; urea degradation; CO(2) and NH(3) from urea (urease route): step 1/1. This Ralstonia nicotianae (strain ATCC BAA-1114 / GMI1000) (Ralstonia solanacearum) protein is Urease subunit beta.